The following is a 1827-amino-acid chain: MARKKFSGLEISLIVLFVIVTIIAIALIVVLATKTPAVDEISDSTSTPATTRVTTNPSDSGKCPNVLNDPVNVRINCIPEQFPTEGICAQRGCCWRPWNDSLIPWCFFVDNHGYNVQDMTTTSIGVEAKLNRIPSPTLFGNDINSVLFTTQNQTPNRFRFKITDPNNRRYEVPHQYVKEFTGPTVSDTLYDVKVAQNPFSIQVIRKSNGKTLFDTSIGPLVYSDQYLQISTRLPSDYIYGIGEQVHKRFRHDLSWKTWPIFTRDQLPGDNNNNLYGHQTFFMCIEDTSGKSFGVFLMNSNAMEIFIQPTPIVTYRVTGGILDFYILLGDTPEQVVQQYQQLVGLPAMPAYWNLGFQLSRWNYKSLDVVKEVVRRNREAGIPFDTQVTDIDYMEDKKDFTYDQVAFNGLPQFVQDLHDHGQKYVIILDPAISIGRRANGTTYATYERGNTQHVWINESDGSTPIIGEVWPGLTVYPDFTNPNCIDWWANECSIFHQEVQYDGLWIDMNEVSSFIQGSTKGCNVNKLNYPPFTPDILDKLMYSKTICMDAVQNWGKQYDVHSLYGYSMAIATEQAVQKVFPNKRSFILTRSTFAGSGRHAAHWLGDNTASWEQMEWSITGMLEFSLFGIPLVGADICGFVAETTEELCRRWMQLGAFYPFSRNHNSDGYEHQDPAFFGQNSLLVKSSRQYLTIRYTLLPFLYTLFYKAHVFGETVARPVLHEFYEDTNSWIEDTEFLWGPALLITPVLKQGADTVSAYIPDAIWYDYESGAKRPWRKQRVDMYLPADKIGLHLRGGYIIPIQEPDVTTTASRKNPLGLIVALGENNTAKGDFFWDDGETKDTIQNGNYILYTFSVSNNTLDIVCTHSSYQEGTTLAFQTVKILGLTDSVTEVRVAENNQPMNAHSNFTYDASNQVLLIADLKLNLGRNFSVQWNQIFSENERFNCYPDADLATEQKCTQRGCVWRTGSSLSKAPECYFPRQDNSYSVNSARYSSMGITADLQLNTANARIKLPSDPISTLRVEVKYHKNDMLQFKIYDPQKKRYEVPVPLNIPTTPISTYEDRLYDVEIKENPFGIQIRRRSSGRVIWDSWLPGFAFNDQFIQISTRLPSEYIYGFGEVEHTAFKRDLNWNTWGMFTRDQPPGYKLNSYGFHPYYMALEEEGNAHGVFLLNSNAMDVTFQPTPALTYRTVGGILDFYMFLGPTPEVATKQYHEVIGHPVMPAYWALGFQLCRYGYANTSEVRELYDAMVAANIPYDVQYTDIDYMERQLDFTIGEAFQDLPQFVDKIRGEGMRYIIILDPAISGNETKTYPAFERGQQNDVFVKWPNTNDICWAKVWPDLPNITIDKTLTEDEAVNASRAHVAFPDFFRTSTAEWWAREIVDFYNEKMKFDGLWIDMNEPSSFVNGTTTNQCRNDELNYPPYFPELTKRTDGLHFRTICMEAEQILSDGTSVLHYDVHNLYGWSQMKPTHDALQKTTGKRGIVISRSTYPTSGRWGGHWLGDNYARWDNMDKSIIGMMEFSLFGMSYTGADICGFFNNSEYHLCTRWMQLGAFYPYSRNHNIANTRRQDPASWNETFAEMSRNILNIRYTLLPYFYTQMHEIHANGGTVIRPLLHEFFDEKPTWDIFKQFLWGPAFMVTPVLEPYVQTVNAYVPNARWFDYHTGKDIGVRGQFQTFNASYDTINLHVRGGHILPCQEPAQNTFYSRQKHMKLIVAADDNQMAQGSLFWDDGESIDTYERDLYLSVQFNLNQTTLTSTILKRGYINKSETRLGSLHVWGKGTTPVNAVTLTYNGNKNSLPFNEDTTNMILRIDLTTHNVTLEEPIEINWS.

Residues 2 to 12 are Cytoplasmic-facing; it reads ARKKFSGLEIS. Serine 7 bears the Phosphoserine; by PKA mark. Residues 13–32 traverse the membrane as a helical; Signal-anchor for type II membrane protein segment; it reads LIVLFVIVTIIAIALIVVLA. Over 33-1827 the chain is Lumenal; it reads TKTPAVDEIS…LEEPIEINWS (1795 aa). Residues 40-61 are disordered; the sequence is EISDSTSTPATTRVTTNPSDSG. Residues 45-55 show a composition bias toward low complexity; it reads TSTPATTRVTT. In terms of domain architecture, P-type 1 spans 61-110; it reads GKCPNVLNDPVNVRINCIPEQFPTEGICAQRGCCWRPWNDSLIPWCFFVD. Disulfide bonds link cysteine 63–cysteine 94, cysteine 77–cysteine 93, and cysteine 88–cysteine 106. N-linked (GlcNAc...) asparagine glycosylation is present at asparagine 99. The isomaltase stretch occupies residues 110 to 1007; that stretch reads DNHGYNVQDM…DLQLNTANAR (898 aa). Sulfotyrosine is present on residues tyrosine 237 and tyrosine 239. Substrate-binding residues include aspartate 264 and aspartate 388. 2 positions are modified to sulfotyrosine: tyrosine 391 and tyrosine 400. N-linked (GlcNAc...) asparagine glycans are attached at residues asparagine 437 and asparagine 455. Residue aspartate 505 is the Nucleophile; for isomaltase activity of the active site. A disulfide bond links cysteine 520 and cysteine 545. Arginine 588 contributes to the substrate binding site. Aspartate 604 serves as the catalytic For isomaltase activity. Cysteine 635 and cysteine 646 are oxidised to a cystine. Position 662 (histidine 662) interacts with substrate. Sulfotyrosine occurs at positions 667, 763, and 765. N-linked (GlcNAc...) asparagine glycosylation is found at asparagine 823, asparagine 855, asparagine 904, and asparagine 926. Residues 932–978 form the P-type 2 domain; the sequence is NQIFSENERFNCYPDADLATEQKCTQRGCVWRTGSSLSKAPECYFPR. Residues 1008-1827 are sucrase; sequence IKLPSDPIST…LEEPIEINWS (820 aa). Residues asparagine 1235, asparagine 1303, asparagine 1340, and asparagine 1354 are each glycosylated (N-linked (GlcNAc...) asparagine). Aspartate 1394 acts as the Nucleophile; for sucrase activity in catalysis. Glutamate 1397 functions as the For sucrase activity in the catalytic mechanism. N-linked (GlcNAc...) asparagine glycosylation occurs at asparagine 1403. The active-site Proton donor; for isomaltase activity is the aspartate 1500. Asparagine 1535, asparagine 1572, asparagine 1675, asparagine 1748, asparagine 1763, and asparagine 1815 each carry an N-linked (GlcNAc...) asparagine glycan.

It belongs to the glycosyl hydrolase 31 family. The resulting sucrase and isomaltase subunits stay associated with one another in a complex by non-covalent linkages. The precursor is proteolytically cleaved when exposed to pancreatic proteases in the intestinal lumen. Post-translationally, sulfated. Expressed in the poorly differentiated crypt cells of the small intestine as well as in the mature villous cells. Expressed at very low levels in the colon.

Its subcellular location is the apical cell membrane. It catalyses the reaction Hydrolysis of sucrose and maltose by an alpha-D-glucosidase-type action.. The enzyme catalyses Hydrolysis of (1-&gt;6)-alpha-D-glucosidic linkages in some oligosaccharides produced from starch and glycogen by alpha-amylase, and in isomaltose.. Functionally, plays an important role in the final stage of carbohydrate digestion. Isomaltase activity is specific for both alpha-1,4- and alpha-1,6-oligosaccharides. This Homo sapiens (Human) protein is Sucrase-isomaltase, intestinal (SI).